Here is a 109-residue protein sequence, read N- to C-terminus: MSQEIAVVGSPEFTTGFRLAGVRKFETVPDENKDEQLDEAVRSALGDDDVGIIVMHNDDLEHLSRTVREDVETSIEPTLVTLGGGAGAGGLRDQIKRAIGIDLMEEDES.

This sequence belongs to the V-ATPase F subunit family. In terms of assembly, has multiple subunits with at least A(3), B(3), C, D, E, F, H, I and proteolipid K(x).

The protein resides in the cell membrane. Its function is as follows. Component of the A-type ATP synthase that produces ATP from ADP in the presence of a proton gradient across the membrane. In Haloquadratum walsbyi (strain DSM 16790 / HBSQ001), this protein is A-type ATP synthase subunit F.